We begin with the raw amino-acid sequence, 769 residues long: Serine protease HtrA-like (769 aa).

The segment covering 1-20 (MDIGKKHVIPKSQYRRKRRE) has biased composition (basic residues). A disordered region spans residues 1-390 (MDIGKKHVIP…ATSKLNKGRA (390 aa)). 2 stretches are compositionally biased toward basic and acidic residues: residues 21–64 (FFHN…ERFK) and 71–108 (LEQR…DVSK). Over residues 126–137 (YEQNSEATLSTK) the composition is skewed to polar residues. Residues 138–186 (STDKVESTDMRKLSSDKNKVGHEEQHVLSKPSEHDKETRIDFESSRTDS) show a composition bias toward basic and acidic residues. Positions 247 to 262 (QQSQNEQTKTYTYGDS) are enriched in polar residues. 2 stretches are compositionally biased toward basic and acidic residues: residues 264 to 296 (QNDK…HIVD) and 310 to 330 (KTDD…HKQN). A compositionally biased stretch (polar residues) spans 331–347 (ADSSETVGYQSQSSASH). The span at 348 to 364 (RITEKRNNAINDHDKLN) shows a compositional bias: basic and acidic residues. Residues 366–390 (QKPNAKTSANNNQKKATSKLNKGRA) show a composition bias toward polar residues. The chain crosses the membrane as a helical span at residues 410-430 (LVILMGIIILIVILNAIFNNV). Residues His-504, Asp-534, and Ser-619 each act as charge relay system in the active site. Residues 680 to 733 (IASLNSFERQAVKLPGKVKNGVVVDQVDNNGLADQSGLKKGDVITELDGKLLED) form the PDZ domain.

The protein belongs to the peptidase S1C family.

The protein resides in the cell membrane. In Staphylococcus aureus (strain MSSA476), this protein is Serine protease HtrA-like.